The sequence spans 87 residues: uncharacterized protein (87 aa).

This is an uncharacterized protein from Bacillus subtilis (strain 168).